Consider the following 491-residue polypeptide: Glycogen synthase (491 aa).

K15 serves as a coordination point for ADP-alpha-D-glucose.

The protein belongs to the glycosyltransferase 1 family. Bacterial/plant glycogen synthase subfamily.

It catalyses the reaction [(1-&gt;4)-alpha-D-glucosyl](n) + ADP-alpha-D-glucose = [(1-&gt;4)-alpha-D-glucosyl](n+1) + ADP + H(+). The protein operates within glycan biosynthesis; glycogen biosynthesis. In terms of biological role, synthesizes alpha-1,4-glucan chains using ADP-glucose. The sequence is that of Glycogen synthase from Treponema denticola (strain ATCC 35405 / DSM 14222 / CIP 103919 / JCM 8153 / KCTC 15104).